An 830-amino-acid polypeptide reads, in one-letter code: Periplasmic nitrate reductase (830 aa).

The segment at residues 1–32 is a signal peptide (tat-type signal); that stretch reads MELNRRDFMKANAAVAAAAAAGITIPVKNVHA. The 4Fe-4S Mo/W bis-MGD-type domain maps to 39–95; the sequence is IRWDKAPCRYCGTGCSVLVGTKDGRVVATQGDPDAEVNRGLNCIKGYFLSKIMYGAD. Positions 46, 49, 53, and 81 each coordinate [4Fe-4S] cluster. Mo-bis(molybdopterin guanine dinucleotide) contacts are provided by residues K83, Q151, N176, C180, 213-220, 244-248, M374, Q378, N484, 510-511, K533, D560, and 720-729; these read WGSNMAEM, STFEH, SD, and TGRVLEHWHT. Substrate is bound at residue F796. Positions 804 and 821 each coordinate Mo-bis(molybdopterin guanine dinucleotide).

This sequence belongs to the prokaryotic molybdopterin-containing oxidoreductase family. NasA/NapA/NarB subfamily. Component of the periplasmic nitrate reductase NapAB complex composed of NapA and NapB. It depends on [4Fe-4S] cluster as a cofactor. Mo-bis(molybdopterin guanine dinucleotide) is required as a cofactor. In terms of processing, predicted to be exported by the Tat system. The position of the signal peptide cleavage has not been experimentally proven.

It localises to the periplasm. It carries out the reaction 2 Fe(II)-[cytochrome] + nitrate + 2 H(+) = 2 Fe(III)-[cytochrome] + nitrite + H2O. Functionally, catalytic subunit of the periplasmic nitrate reductase complex NapAB. Receives electrons from NapB and catalyzes the reduction of nitrate to nitrite. This chain is Periplasmic nitrate reductase, found in Mannheimia succiniciproducens (strain KCTC 0769BP / MBEL55E).